Reading from the N-terminus, the 99-residue chain is Small ribosomal subunit protein bS20 (99 aa).

Positions 1–20 (MASAKPKKKNPRLASGRKRA) are enriched in basic residues. The tract at residues 1–29 (MASAKPKKKNPRLASGRKRARQDVKLNAA) is disordered.

The protein belongs to the bacterial ribosomal protein bS20 family.

In terms of biological role, binds directly to 16S ribosomal RNA. This is Small ribosomal subunit protein bS20 from Paracidovorax citrulli (strain AAC00-1) (Acidovorax citrulli).